Reading from the N-terminus, the 403-residue chain is Endophilin-B2 (403 aa).

Residues 1–27 (MDFNVKKLASDAGVFFSRAMQFTEEKL) form a membrane-binding amphipathic helix region. The region spanning 24–287 (EEKLGQAEKT…LGRFSGTFVG (264 aa)) is the BAR domain. The stretch at 210-233 (WSDEVEKAEHELRLTQTEFDRQAE) forms a coiled coil. The region spanning 343–403 (SGTRKARVLY…VPVTYLELLS (61 aa)) is the SH3 domain.

This sequence belongs to the endophilin family. In terms of assembly, homodimer, and heterodimer with SH3GLB1.

The protein resides in the cytoplasm. The chain is Endophilin-B2 from Gallus gallus (Chicken).